The chain runs to 118 residues: Protein RALF-like 24 (118 aa).

A signal peptide spans 1-22; that stretch reads MSRSLALVYLSLLCLQTHLSIS. The propeptide at 23 to 63 is removed in mature form; the sequence is VTVPIPSVNGEIDAMLNRNGVIGEEEGEEMMPSEISRRVMM. Disulfide bonds link C81–C91 and C103–C109.

It belongs to the plant rapid alkalinization factor (RALF) family. Post-translationally, proteolytically cleaved, probably by S1P, a subtilisin-like serine protease (subtilase).

The protein resides in the secreted. Its function is as follows. Cell signaling peptide that may regulate plant stress, growth, and development. Mediates a rapid alkalinization of extracellular space by mediating a transient increase in the cytoplasmic Ca(2+) concentration leading to a calcium-dependent signaling events through a cell surface receptor and a concomitant activation of some intracellular mitogen-activated protein kinases. The chain is Protein RALF-like 24 (RALFL24) from Arabidopsis thaliana (Mouse-ear cress).